Reading from the N-terminus, the 881-residue chain is Serine/threonine-protein phosphatase 6 regulatory subunit 1 (881 aa).

The segment at 10 to 403 (SSHLDTLLER…VFNNFLHAQV (394 aa)) is interaction with PPP6C. At S232 the chain carries Phosphoserine. T524 is modified (phosphothreonine). Residues S529, S530, S531, S635, and S638 each carry the phosphoserine modification. Acidic residues-rich tracts occupy residues 621–642 (DDDE…DGED) and 669–686 (DSED…DEEG). Residues 621-881 (DDDEEEEDEE…PEGPASPGSQ (261 aa)) are disordered. Residues 700-710 (YPSPGPQPPGP) show a composition bias toward pro residues. A phosphoserine mark is found at S702, S726, and S759. Polar residues predominate over residues 814-830 (APSSSDSATRDPSTSVP). Position 846 is a phosphoserine (S846).

It belongs to the SAPS family. In terms of assembly, protein phosphatase 6 (PP6) holoenzyme is proposed to be a heterotrimeric complex formed of the catalytic subunit, a SAPS domain-containing subunit (PP6R) and an ankyrin repeat-domain containing regulatory subunit (ARS). Interacts with PPP6C and NFKBIE. Interacts with ANKRD28, ANKRD44 and ANKRD52. Ubiquitous with higher expression in testis.

The protein localises to the cytoplasm. Its function is as follows. Regulatory subunit of protein phosphatase 6 (PP6). May function as a scaffolding PP6 subunit. Involved in the PP6-mediated dephosphorylation of NFKBIE opposing its degradation in response to TNF-alpha. In Homo sapiens (Human), this protein is Serine/threonine-protein phosphatase 6 regulatory subunit 1 (PPP6R1).